The chain runs to 180 residues: Large ribosomal subunit protein uL5 (180 aa).

This sequence belongs to the universal ribosomal protein uL5 family. In terms of assembly, part of the 50S ribosomal subunit; part of the 5S rRNA/L5/L18/L25 subcomplex. Contacts the 5S rRNA and the P site tRNA. Forms a bridge to the 30S subunit in the 70S ribosome.

Functionally, this is one of the proteins that bind and probably mediate the attachment of the 5S RNA into the large ribosomal subunit, where it forms part of the central protuberance. In the 70S ribosome it contacts protein S13 of the 30S subunit (bridge B1b), connecting the 2 subunits; this bridge is implicated in subunit movement. Contacts the P site tRNA; the 5S rRNA and some of its associated proteins might help stabilize positioning of ribosome-bound tRNAs. The sequence is that of Large ribosomal subunit protein uL5 from Streptococcus mutans serotype c (strain ATCC 700610 / UA159).